A 203-amino-acid polypeptide reads, in one-letter code: N-(5'-phosphoribosyl)anthranilate isomerase (203 aa).

The protein belongs to the TrpF family.

It catalyses the reaction N-(5-phospho-beta-D-ribosyl)anthranilate = 1-(2-carboxyphenylamino)-1-deoxy-D-ribulose 5-phosphate. It participates in amino-acid biosynthesis; L-tryptophan biosynthesis; L-tryptophan from chorismate: step 3/5. This is N-(5'-phosphoribosyl)anthranilate isomerase from Thermoanaerobacter pseudethanolicus (strain ATCC 33223 / 39E) (Clostridium thermohydrosulfuricum).